Here is a 122-residue protein sequence, read N- to C-terminus: Ribonuclease P protein component (122 aa).

The protein belongs to the RnpA family. Consists of a catalytic RNA component (M1 or rnpB) and a protein subunit.

It carries out the reaction Endonucleolytic cleavage of RNA, removing 5'-extranucleotides from tRNA precursor.. Its function is as follows. RNaseP catalyzes the removal of the 5'-leader sequence from pre-tRNA to produce the mature 5'-terminus. It can also cleave other RNA substrates such as 4.5S RNA. The protein component plays an auxiliary but essential role in vivo by binding to the 5'-leader sequence and broadening the substrate specificity of the ribozyme. The polypeptide is Ribonuclease P protein component (Lactobacillus gasseri (strain ATCC 33323 / DSM 20243 / BCRC 14619 / CIP 102991 / JCM 1131 / KCTC 3163 / NCIMB 11718 / NCTC 13722 / AM63)).